A 199-amino-acid polypeptide reads, in one-letter code: MQQQASAMRPEGAQPLIARAPSGIIDPNTGKPVGADDPFFLGVNRELSDKGFFVAATDDLITWARTGSLMWMTFGLACCAVEMMQLSMPRYDAERFGFAPRASPRQSDVMIVAGTLTNKMAPALRKVYDQMPEPRYVISMGSCANGGGYYHYSYSVVRGCDRIVPIDIYVPGCPPTAEALLYGVMLLQKKIRRTGTIER.

[4Fe-4S] cluster contacts are provided by Cys-78, Cys-79, Cys-143, and Cys-173.

It belongs to the complex I 20 kDa subunit family. NDH-1 is composed of 14 different subunits. Subunits NuoB, C, D, E, F, and G constitute the peripheral sector of the complex. [4Fe-4S] cluster serves as cofactor.

Its subcellular location is the cell inner membrane. The enzyme catalyses a quinone + NADH + 5 H(+)(in) = a quinol + NAD(+) + 4 H(+)(out). Its function is as follows. NDH-1 shuttles electrons from NADH, via FMN and iron-sulfur (Fe-S) centers, to quinones in the respiratory chain. The immediate electron acceptor for the enzyme in this species is believed to be ubiquinone. Couples the redox reaction to proton translocation (for every two electrons transferred, four hydrogen ions are translocated across the cytoplasmic membrane), and thus conserves the redox energy in a proton gradient. This is NADH-quinone oxidoreductase subunit B 2 from Rhodopseudomonas palustris (strain BisB5).